We begin with the raw amino-acid sequence, 411 residues long: Phosphoglycerate kinase (411 aa).

Residues 22–24 (DFN), Arg37, 60–63 (HLSR), Arg123, and Arg165 each bind substrate. Residues Lys216, Glu339, and 366–369 (GGDS) each bind ATP.

It belongs to the phosphoglycerate kinase family. Monomer.

The protein localises to the cytoplasm. It carries out the reaction (2R)-3-phosphoglycerate + ATP = (2R)-3-phospho-glyceroyl phosphate + ADP. It participates in carbohydrate degradation; glycolysis; pyruvate from D-glyceraldehyde 3-phosphate: step 2/5. The protein is Phosphoglycerate kinase (pgk) of Mycoplasma genitalium (strain ATCC 33530 / DSM 19775 / NCTC 10195 / G37) (Mycoplasmoides genitalium).